The chain runs to 184 residues: NADH-quinone oxidoreductase subunit B (184 aa).

The [4Fe-4S] cluster site is built by Cys-63, Cys-64, Cys-128, and Cys-158.

This sequence belongs to the complex I 20 kDa subunit family. NDH-1 is composed of 14 different subunits. Subunits NuoB, C, D, E, F, and G constitute the peripheral sector of the complex. [4Fe-4S] cluster serves as cofactor.

Its subcellular location is the cell inner membrane. The enzyme catalyses a quinone + NADH + 5 H(+)(in) = a quinol + NAD(+) + 4 H(+)(out). NDH-1 shuttles electrons from NADH, via FMN and iron-sulfur (Fe-S) centers, to quinones in the respiratory chain. Couples the redox reaction to proton translocation (for every two electrons transferred, four hydrogen ions are translocated across the cytoplasmic membrane), and thus conserves the redox energy in a proton gradient. The sequence is that of NADH-quinone oxidoreductase subunit B from Xylella fastidiosa (strain 9a5c).